Reading from the N-terminus, the 285-residue chain is Protease HtpX homolog (285 aa).

2 helical membrane passes run 7–27 (TAMLMAAITALFIVIGGMIGG) and 30–50 (GMTIALLFALGMNFFSYWFSD). Position 131 (His-131) interacts with Zn(2+). Glu-132 is a catalytic residue. His-135 serves as a coordination point for Zn(2+). Transmembrane regions (helical) follow at residues 146-166 (ITATMAGAISAIANFAMFFGG) and 177-197 (IAGIAVALLAPIAGALIQMAI). Residue Glu-202 participates in Zn(2+) binding.

The protein belongs to the peptidase M48B family. Requires Zn(2+) as cofactor.

The protein localises to the cell inner membrane. This is Protease HtpX homolog from Burkholderia multivorans (strain ATCC 17616 / 249).